Reading from the N-terminus, the 154-residue chain is Myoglobin (154 aa).

The Globin domain maps to 2–148 (GLSDGEWTLV…FRNDMAAQYK (147 aa)). Phosphoserine is present on serine 4. Residue histidine 65 coordinates nitrite. Histidine 65 lines the O2 pocket. A Phosphothreonine modification is found at threonine 68. Residue histidine 94 participates in heme b binding.

The protein belongs to the globin family. In terms of assembly, monomeric.

It localises to the cytoplasm. The protein resides in the sarcoplasm. It catalyses the reaction Fe(III)-heme b-[protein] + nitric oxide + H2O = Fe(II)-heme b-[protein] + nitrite + 2 H(+). The catalysed reaction is H2O2 + AH2 = A + 2 H2O. In terms of biological role, monomeric heme protein which primary function is to store oxygen and facilitate its diffusion within muscle tissues. Reversibly binds oxygen through a pentacoordinated heme iron and enables its timely and efficient release as needed during periods of heightened demand. Depending on the oxidative conditions of tissues and cells, and in addition to its ability to bind oxygen, it also has a nitrite reductase activity whereby it regulates the production of bioactive nitric oxide. Under stress conditions, like hypoxia and anoxia, it also protects cells against reactive oxygen species thanks to its pseudoperoxidase activity. The chain is Myoglobin from Capra hircus (Goat).